We begin with the raw amino-acid sequence, 1562 residues long: Neuralized-like protein 4 (1562 aa).

The segment covering 1 to 42 has biased composition (gly residues); the sequence is MAAGSGGSGGSGGGPGPGPGGGGGPSGSGSGPGSNGGLGSGG. 2 disordered regions span residues 1–48 and 207–236; these read MAAG…HPRT and PEPG…LAEQ. 2 NHR domains span residues 41 to 207 and 317 to 484; these read GGEL…VLPP and ALLF…IVHN. The segment covering 207-224 has biased composition (pro residues); it reads PEPGFSPPTPIPTPPLEP. Phosphoserine is present on S502. NHR domains follow at residues 520–686 and 716–884; these read RLLF…IVDD and DLRF…ITNA. The interval 691–716 is disordered; it reads PVPEPLPEGNNQVSPSSPSSGAGGSD. Phosphoserine is present on S907. The NHR 5 domain maps to 913-1086; sequence AHRFHSTCGK…PVRGVSIVSS (174 aa). Residues 1086–1123 form a disordered region; it reads STRLEESEGTQPPSPSSDTGSEGEEDDEGEEHGLGGQN. Residues 1106–1115 show a composition bias toward acidic residues; the sequence is SEGEEDDEGE. An NHR 6 domain is found at 1131-1294; the sequence is TLEFLENHGK…QCEQVTIVNP (164 aa).

In terms of assembly, interacts with CCP110; this interaction propmotes CCP110 ubiquitination and degradation via the proteasome pathway. Via its interaction with CCP110, may indirectly interact with CEP97. Interacts with the E3 ubiquitin-protein ligase HERC2 and UBE3A. May interact with MAPK6 and hence mediate MAPK6 interaction with UBE3A. Interaction with UBE3A may be indirect and mediated by HERC2. Ubiquitinated; undergoes HERC2-dependent 'Lys-48' ubiquitination. This ubiquitination leads to proteasomal degradation. As to expression, widely expressed at high levels (including brain).

It localises to the cytoplasm. The protein resides in the cytoskeleton. The protein localises to the microtubule organizing center. Its subcellular location is the centrosome. It is found in the centriole. Functionally, promotes CCP110 ubiquitination and proteasome-dependent degradation. By counteracting accumulation of CP110, maintains normal centriolar homeostasis and preventing formation of ectopic microtubular organizing centers. This Homo sapiens (Human) protein is Neuralized-like protein 4 (NEURL4).